The chain runs to 293 residues: N(1)-aminopropylagmatine ureohydrolase (293 aa).

Mn(2+)-binding residues include histidine 105, aspartate 128, histidine 130, aspartate 132, aspartate 210, and aspartate 212.

It belongs to the arginase family. Requires Mn(2+) as cofactor.

It carries out the reaction N(1)-(3-aminopropyl)agmatine + H2O = urea + spermidine. It participates in amine and polyamine biosynthesis; spermidine biosynthesis. In terms of biological role, involved in the biosynthesis of polyamines which are thought to support the growth of thermophilic microorganisms under high-temperature conditions. It seems that long-chain and branched-chain of polyamines effectively stabilize DNA and RNA, respectively. Catalyzes the decarboxylation of N1-(3-aminopropyl)agmatine to yield spermidine and urea. Does not act on agmatine. This is N(1)-aminopropylagmatine ureohydrolase from Thermus thermophilus (strain ATCC BAA-163 / DSM 7039 / HB27).